Consider the following 398-residue polypeptide: Isopenicillin N epimerase (398 aa).

Lys217 bears the N6-(pyridoxal phosphate)lysine mark.

Belongs to the class-V pyridoxal-phosphate-dependent aminotransferase family. Pyridoxal 5'-phosphate is required as a cofactor.

The enzyme catalyses isopenicillin N = penicillin N. Its pathway is antibiotic biosynthesis; cephalosporin C biosynthesis. Functionally, catalyzes the reversible isomerization between isopenicillin N and penicillin N. This is Isopenicillin N epimerase (cefD) from Streptomyces clavuligerus.